The sequence spans 1369 residues: Xanthine dehydrogenase (1369 aa).

Positions Gly-20–Ile-106 constitute a 2Fe-2S ferredoxin-type domain. [2Fe-2S] cluster-binding residues include Cys-58, Cys-63, Cys-66, Cys-88, Cys-128, Cys-131, Cys-164, and Cys-166. Residues Asn-265–Pro-450 form the FAD-binding PCMH-type domain. FAD-binding positions include Leu-293–Val-300, Phe-373, Ser-383–Asn-387, Asp-396, Leu-440, and Lys-458. Residues Gln-804 and Phe-835 each coordinate Mo-molybdopterin. Substrate contacts are provided by Glu-839 and Arg-917. Arg-949 lines the Mo-molybdopterin pocket. Residues Phe-951 and Thr-1047 each contribute to the substrate site. Mo-molybdopterin is bound at residue Ala-1116. The active-site Proton acceptor is the Glu-1305.

This sequence belongs to the xanthine dehydrogenase family. As to quaternary structure, homodimer. [2Fe-2S] cluster serves as cofactor. Requires FAD as cofactor. Mo-molybdopterin is required as a cofactor.

It catalyses the reaction xanthine + NAD(+) + H2O = urate + NADH + H(+). The catalysed reaction is hypoxanthine + NAD(+) + H2O = xanthine + NADH + H(+). Key enzyme involved in purine catabolism. Catalyzes the oxidation of hypoxanthine to xanthine and the oxidation of xanthine to urate. The sequence is that of Xanthine dehydrogenase (XDH) from Oryza sativa subsp. japonica (Rice).